The sequence spans 200 residues: 2,3-bisphosphoglycerate-dependent phosphoglycerate mutase (200 aa).

Residue H9 is the Tele-phosphohistidine intermediate of the active site. H142 is an active-site residue.

The protein belongs to the phosphoglycerate mutase family. As to quaternary structure, homodimer.

It carries out the reaction (2R)-2-phosphoglycerate = (2R)-3-phosphoglycerate. The protein operates within carbohydrate degradation; glycolysis; pyruvate from D-glyceraldehyde 3-phosphate: step 3/5. Catalyzes the interconversion of 2-phosphoglycerate and 3-phosphoglycerate. This is 2,3-bisphosphoglycerate-dependent phosphoglycerate mutase from Thermoplasma acidophilum (strain ATCC 25905 / DSM 1728 / JCM 9062 / NBRC 15155 / AMRC-C165).